The sequence spans 158 residues: NAD(P)H-quinone oxidoreductase subunit J, chloroplastic (158 aa).

It belongs to the complex I 30 kDa subunit family. In terms of assembly, NDH is composed of at least 16 different subunits, 5 of which are encoded in the nucleus.

Its subcellular location is the plastid. The protein resides in the chloroplast thylakoid membrane. It carries out the reaction a plastoquinone + NADH + (n+1) H(+)(in) = a plastoquinol + NAD(+) + n H(+)(out). It catalyses the reaction a plastoquinone + NADPH + (n+1) H(+)(in) = a plastoquinol + NADP(+) + n H(+)(out). NDH shuttles electrons from NAD(P)H:plastoquinone, via FMN and iron-sulfur (Fe-S) centers, to quinones in the photosynthetic chain and possibly in a chloroplast respiratory chain. The immediate electron acceptor for the enzyme in this species is believed to be plastoquinone. Couples the redox reaction to proton translocation, and thus conserves the redox energy in a proton gradient. The chain is NAD(P)H-quinone oxidoreductase subunit J, chloroplastic from Lupinus luteus (European yellow lupine).